Here is an 848-residue protein sequence, read N- to C-terminus: Neuroligin-3 (848 aa).

An N-terminal signal peptide occupies residues 1-37 (MWLRLGPPSLSLSPKPTVGRSLCLTLWFLSLALRAST). Residues 38–709 (QAPAPTVNTH…NPRDYSTELS (672 aa)) lie on the Extracellular side of the membrane. N-linked (GlcNAc...) asparagine glycosylation is present at N98. The cysteines at positions 106 and 141 are disulfide-linked. The tract at residues 170–195 (RKGGSGAKKQGEDLADNDGDEDEDIR) is disordered. The segment covering 182–194 (DLADNDGDEDEDI) has biased composition (acidic residues). 2 cysteine pairs are disulfide-bonded: C340–C351 and C510–C544. An N-linked (GlcNAc...) asparagine glycan is attached at N545. 2 stretches are compositionally biased toward polar residues: residues 645 to 656 (TKVPPPDTTHSS) and 677 to 689 (AYSNENAQGSWNG). The disordered stretch occupies residues 645-694 (TKVPPPDTTHSSHITRRPNGKTWSTKRPAISPAYSNENAQGSWNGDQDAG). A helical transmembrane segment spans residues 710 to 730 (VTIAVGASLLFLNVLAFAALY). Topologically, residues 731–848 (YRKDKRRQEP…LPHSHSTTRV (118 aa)) are cytoplasmic. Position 745 is a phosphoserine (S745). The residue at position 792 (Y792) is a Phosphotyrosine.

This sequence belongs to the type-B carboxylesterase/lipase family. As to quaternary structure, homodimer, and heterodimer with NLGN1 and NLGN2. Interacts with neurexins NRXN1, NRXN2 and NRXN3. Interaction with neurexins is mediated by heparan sulfate glycan modification on neurexin. Interacts (via its C-terminus) with DLG4/PSD-95 (via PDZ domain 3). Expressed in the blood vessel walls (at protein level). Detected in throughout the brain and in spinal cord. Detected in brain, and at lower levels in pancreas islet beta cells.

It is found in the cell membrane. Its subcellular location is the synapse. Its function is as follows. Cell surface protein involved in cell-cell-interactions via its interactions with neurexin family members. Plays a role in synapse function and synaptic signal transmission, and may mediate its effects by clustering other synaptic proteins. May promote the initial formation of synapses, but is not essential for this. May also play a role in glia-glia or glia-neuron interactions in the developing peripheral nervous system. This is Neuroligin-3 (NLGN3) from Homo sapiens (Human).